The sequence spans 412 residues: UPF0761 membrane protein LPC_2650 (412 aa).

A run of 6 helical transmembrane segments spans residues 36–56 (ALAFTSLLAVVPLMSVGLAIF), 99–119 (LSIWGVVFLIFTALLVMFTIE), 137–157 (AFLLYWAIISLAPVLLGLSLA), 177–197 (ILHYSPFFLSLIGFTFLYVVV), 210–230 (GGLVAAILFESAKHAFAYYLI), and 241–261 (AFATVPIFFIWVYWVWIITLL).

It belongs to the UPF0761 family.

It is found in the cell inner membrane. In Legionella pneumophila (strain Corby), this protein is UPF0761 membrane protein LPC_2650.